A 393-amino-acid chain; its full sequence is Pyridinium-3,5-bisthiocarboxylic acid mononucleotide nickel insertion protein (393 aa).

This sequence belongs to the LarC family.

It catalyses the reaction Ni(II)-pyridinium-3,5-bisthiocarboxylate mononucleotide = pyridinium-3,5-bisthiocarboxylate mononucleotide + Ni(2+). Functionally, involved in the biosynthesis of a nickel-pincer cofactor ((SCS)Ni(II) pincer complex). Binds Ni(2+), and functions in nickel delivery to pyridinium-3,5-bisthiocarboxylic acid mononucleotide (P2TMN), to form the mature cofactor. Is thus probably required for the activation of nickel-pincer cofactor-dependent enzymes. This is Pyridinium-3,5-bisthiocarboxylic acid mononucleotide nickel insertion protein from Nocardioides sp. (strain ATCC BAA-499 / JS614).